A 111-amino-acid chain; its full sequence is Wound-induced proteinase inhibitor 1 (111 aa).

The signal sequence occupies residues 1–23 (MESKFAHIIVFFLLATSFETLMA). Positions 24-36 (RKEIDGPEVIELL) are excised as a propeptide.

Belongs to the protease inhibitor I13 (potato type I serine protease inhibitor) family.

The protein localises to the secreted. In Solanum lycopersicum (Tomato), this protein is Wound-induced proteinase inhibitor 1 (PIIF).